We begin with the raw amino-acid sequence, 309 residues long: Homoserine kinase (309 aa).

91 to 101 contacts ATP; sequence PIGSGLGSSAC.

It belongs to the GHMP kinase family. Homoserine kinase subfamily.

It is found in the cytoplasm. It catalyses the reaction L-homoserine + ATP = O-phospho-L-homoserine + ADP + H(+). It functions in the pathway amino-acid biosynthesis; L-threonine biosynthesis; L-threonine from L-aspartate: step 4/5. Functionally, catalyzes the ATP-dependent phosphorylation of L-homoserine to L-homoserine phosphate. This Cronobacter sakazakii (strain ATCC BAA-894) (Enterobacter sakazakii) protein is Homoserine kinase.